A 298-amino-acid polypeptide reads, in one-letter code: 5'-AMP-activated protein kinase subunit beta (298 aa).

The segment at 1–98 (MGNVQSQEGE…KTHQPYSGPC (98 aa)) is disordered. Over residues 19-30 (QDATTTPDNANN) the composition is skewed to polar residues. Acidic residues predominate over residues 48–59 (LNQEGEMSDDNQ). A compositionally biased stretch (polar residues) spans 60-77 (QEGGNNRTSQNGTSGSSG). Over residues 78–91 (HTKRRSQTSGKKTH) the composition is skewed to basic residues. ADP is bound at residue 250 to 252 (DQS).

The protein belongs to the 5'-AMP-activated protein kinase beta subunit family. In terms of assembly, AMPK is a heterotrimer of an alpha catalytic subunit (ssp2), a beta (amk2) and a gamma non-catalytic subunits (cbs2). The beta subunit serves as a bridge between the catalytic and the regulatory subunit.

Its subcellular location is the cytoplasm. Beta subunit of AMP-activated protein kinase (AMPK), which is required for transcriptional, metabolic, and developmental adaptations in response to glucose limitation. Has a structural role, mediating heterotrimer formation, and a regulatory role, defining carbon source-regulated subcellular location and substrate specificity of the AMPK kinase complex. The protein is 5'-AMP-activated protein kinase subunit beta (amk2) of Schizosaccharomyces pombe (strain 972 / ATCC 24843) (Fission yeast).